A 412-amino-acid chain; its full sequence is MIIPMLRILLIVLFVLNLVTSKGVLRKVSGDAAPDKAQEPIDDNEEYDDFIPTIDSSVRLDNTIPVPPALPIGLPIIQITTKEPQPPASLTSLPAAPPSAQVAPPAIRPPEAKRTSLEPPQPSTPQASISSTTTVLIRNPTTSIQQLRGPFDDVRVTTVNIGEIVPDTGNDLGEFRKADLSDNMEKEGNENVKDLVKKTTTVNVTNDYYITSSSPTTVMFELQEDTVGEENVFDFDKLFDKKIYIRNDGSTTENTTEQSTTEKSKTTSTYSTTTTAPVNTTSAPTTTHLGTPGTHKKTCIHVKDLKMVDDSVVVQAGTKKGTIEVSVELGEGDDDEENDDDSSEEEETKPPARHVREDKKPVVWKKFEMNCDEEEDDKGKICKLWAAGGLCGTHKPTMFLFCRKTCLCVGPY.

Residues 1-21 (MIIPMLRILLIVLFVLNLVTS) form the signal peptide. Disordered stretches follow at residues 85 to 134 (QPPA…STTT), 250 to 294 (STTE…TPGT), and 327 to 357 (VELG…HVRE). A compositionally biased stretch (low complexity) spans 88–105 (ASLTSLPAAPPSAQVAPP). A compositionally biased stretch (polar residues) spans 124–134 (TPQASISSTTT). Composition is skewed to low complexity over residues 250-259 (STTENTTEQS) and 266-293 (TTST…GTPG). The span at 330-347 (GEGDDDEENDDDSSEEEE) shows a compositional bias: acidic residues. The segment covering 348 to 357 (TKPPARHVRE) has biased composition (basic and acidic residues). A ShKT domain is found at 371–408 (CDEEEDDKGKICKLWAAGGLCGTHKPTMFLFCRKTCLC).

This is an uncharacterized protein from Caenorhabditis elegans.